Here is a 332-residue protein sequence, read N- to C-terminus: Casein kinase II subunit alpha (332 aa).

Residues 43–327 enclose the Protein kinase domain; sequence YEIIRKVGRG…TCQEAMAHPY (285 aa). Residues 49–57 and Lys72 contribute to the ATP site; that span reads VGRGKYSEV. Asp160 (proton acceptor) is an active-site residue.

This sequence belongs to the protein kinase superfamily. Ser/Thr protein kinase family. CK2 subfamily. As to quaternary structure, tetramer composed of two alpha chains, one beta chain and one beta' chain.

The catalysed reaction is L-seryl-[protein] + ATP = O-phospho-L-seryl-[protein] + ADP + H(+). It catalyses the reaction L-threonyl-[protein] + ATP = O-phospho-L-threonyl-[protein] + ADP + H(+). Its function is as follows. Catalytic subunit of a constitutively active serine/threonine-protein kinase complex that phosphorylates a large number of substrates containing acidic residues C-terminal to the phosphorylated serine or threonine. This chain is Casein kinase II subunit alpha, found in Schizosaccharomyces pombe (strain 972 / ATCC 24843) (Fission yeast).